The primary structure comprises 365 residues: NADH-quinone oxidoreductase subunit H 2 (365 aa).

8 helical membrane-spanning segments follow: residues 1 to 21, 71 to 91, 100 to 120, 136 to 156, 199 to 219, 254 to 274, 301 to 321, and 342 to 362; these read MFVVLFVLTLILLYAVFVVWA, LAPVLIFTAIFAGFATLPFAP, VGVFFMITIVSLDVVGIFLAG, IAQVISYEIPLTLSILAVVLI, FVSWNAFKYPFLLLAYVVFFI, ILFLAEYAMMLLVAFLGVVLF, IAGYAWGLFWLISKGITVVFL, and WKILLPLSLFLVIVSGVWVVW.

Belongs to the complex I subunit 1 family. In terms of assembly, NDH-1 is composed of 14 different subunits. Subunits NuoA, H, J, K, L, M, N constitute the membrane sector of the complex.

The protein resides in the cell inner membrane. It carries out the reaction a quinone + NADH + 5 H(+)(in) = a quinol + NAD(+) + 4 H(+)(out). Its function is as follows. NDH-1 shuttles electrons from NADH, via FMN and iron-sulfur (Fe-S) centers, to quinones in the respiratory chain. The immediate electron acceptor for the enzyme in this species is believed to be ubiquinone. Couples the redox reaction to proton translocation (for every two electrons transferred, four hydrogen ions are translocated across the cytoplasmic membrane), and thus conserves the redox energy in a proton gradient. This subunit may bind ubiquinone. This chain is NADH-quinone oxidoreductase subunit H 2, found in Cytophaga hutchinsonii (strain ATCC 33406 / DSM 1761 / CIP 103989 / NBRC 15051 / NCIMB 9469 / D465).